The primary structure comprises 613 residues: Sulfhydryl oxidase 1 (613 aa).

The first 30 residues, 1 to 30 (MTGCGRRSGWLPPLRLLLLPLLLGGPGVGA), serve as a signal peptide directing secretion. In terms of domain architecture, Thioredoxin spans 37–157 (YSASDPLTLL…RERLIDALES (121 aa)). Residues Cys71 and Cys74 each act as nucleophile in the active site. 2 disulfide bridges follow: Cys71–Cys74 and Cys102–Cys111. 2 N-linked (GlcNAc...) asparagine glycosylation sites follow: Asn131 and Asn244. A disulfide bridge links Cys394 with Cys406. An ERV/ALR sulfhydryl oxidase domain is found at 397–504 (SESHFRGFPC…EDPQFPKVQW (108 aa)). 3 residues coordinate FAD: Arg402, Trp409, and His413. At Ser427 the chain carries Phosphoserine. Cys450 and Cys453 are disulfide-bonded. Residues Asp452, His456, 479–486 (WTSHNRVN), Lys501, and Trp504 each bind FAD. Cysteines 510 and 513 form a disulfide.

This sequence belongs to the quiescin-sulfhydryl oxidase (QSOX) family. In terms of assembly, monomer. FAD serves as cofactor. Post-translationally, N-glycosylated. O-glycosylated on Thr and Ser residues. As to expression, detected in endometrium and in uterus glandular epithelial cells (at protein level). Expressed in testis, placenta, pancreas, lung, ovary, endometrium, but not in brain, liver and kidney tissues. Higher expression in epithelial cells.

Its subcellular location is the secreted. It carries out the reaction 2 R'C(R)SH + O2 = R'C(R)S-S(R)CR' + H2O2. Functionally, catalyzes the oxidation of sulfhydryl groups in peptide and protein thiols to disulfides with the reduction of oxygen to hydrogen peroxide. Plays a role in disulfide bond formation in a variety of extracellular proteins. In fibroblasts, required for normal incorporation of laminin into the extracellular matrix, and thereby for normal cell-cell adhesion and cell migration. This is Sulfhydryl oxidase 1 (QSOX1) from Cavia porcellus (Guinea pig).